Here is a 367-residue protein sequence, read N- to C-terminus: MNLLTTRIDLDAIAHNTRLLKNRVGAAKLMAVVKADGYNHGMDRVAPVMAANGADAFGVATIAEALALRATGITTPILCWIWSPEQDWAAAVEAGIDLAVISPRHARVLVDAPPTSRAIRVSVKVDTALHRSGVDEQDWDAVFTLLRDCGHIEVTGLFTHLSCADEPGNPETDHQAETFRRAIDRARALGLEVPENHLCNSPATLTRPDLHMDMVRPGVALYGLEPIPGLDHGLRPAMTWAGAITVVKPIRKGEGTSYGLTWRAEADGFVAVVPAGYADGVPRAAQDHLRVHVNGHDYPQVGRVCMDQFVIFLGDNPHGVTAGDEAVIFGGTGMSATELADALATINYEVICRPTGRTVRDYTGEGK.

K34 acts as the Proton acceptor; specific for D-alanine in catalysis. Residue K34 is modified to N6-(pyridoxal phosphate)lysine. R131 contributes to the substrate binding site. Residue Y258 is the Proton acceptor; specific for L-alanine of the active site. M306 is a substrate binding site.

Belongs to the alanine racemase family. Pyridoxal 5'-phosphate is required as a cofactor.

It catalyses the reaction L-alanine = D-alanine. The protein operates within amino-acid biosynthesis; D-alanine biosynthesis; D-alanine from L-alanine: step 1/1. Functionally, catalyzes the interconversion of L-alanine and D-alanine. May also act on other amino acids. This Corynebacterium efficiens (strain DSM 44549 / YS-314 / AJ 12310 / JCM 11189 / NBRC 100395) protein is Alanine racemase (alr).